Here is a 109-residue protein sequence, read N- to C-terminus: Putative polyketide cyclase (109 aa).

It to polyketide cyclases.

Its function is as follows. Involved in developmentally regulated synthesis of a compound biosynthetically related to polyketide antibiotics which is essential for spore color in Streptomyces halstedii. In Streptomyces halstedii, this protein is Putative polyketide cyclase (sch4).